The sequence spans 227 residues: Ribose-5-phosphate isomerase A (227 aa).

Substrate contacts are provided by residues 26 to 29 (TGST), 82 to 85 (DGAD), and 95 to 98 (KGGG). Glutamate 104 (proton acceptor) is an active-site residue. Lysine 122 serves as a coordination point for substrate.

This sequence belongs to the ribose 5-phosphate isomerase family. In terms of assembly, homodimer.

It catalyses the reaction aldehydo-D-ribose 5-phosphate = D-ribulose 5-phosphate. The protein operates within carbohydrate degradation; pentose phosphate pathway; D-ribose 5-phosphate from D-ribulose 5-phosphate (non-oxidative stage): step 1/1. Functionally, catalyzes the reversible conversion of ribose-5-phosphate to ribulose 5-phosphate. This chain is Ribose-5-phosphate isomerase A, found in Streptococcus equi subsp. zooepidemicus (strain MGCS10565).